The primary structure comprises 261 residues: Ribosomal RNA small subunit methyltransferase J (261 aa).

Residues Arg109–Asp110, Glu125–Arg126, and Asp179 each bind S-adenosyl-L-methionine.

The protein belongs to the methyltransferase superfamily. RsmJ family.

The protein resides in the cytoplasm. It catalyses the reaction guanosine(1516) in 16S rRNA + S-adenosyl-L-methionine = N(2)-methylguanosine(1516) in 16S rRNA + S-adenosyl-L-homocysteine + H(+). Functionally, specifically methylates the guanosine in position 1516 of 16S rRNA. This is Ribosomal RNA small subunit methyltransferase J from Pseudomonas aeruginosa (strain UCBPP-PA14).